A 397-amino-acid polypeptide reads, in one-letter code: Xylose isomerase (397 aa).

Active-site residues include His54 and Asp57. 7 residues coordinate Mg(2+): Glu181, Glu217, His220, Asp245, Asp255, Asp257, and Asp293.

The protein belongs to the xylose isomerase family. In terms of assembly, homotetramer. Mg(2+) is required as a cofactor.

Its subcellular location is the cytoplasm. It catalyses the reaction alpha-D-xylose = alpha-D-xylulofuranose. In Clavibacter michiganensis subsp. michiganensis (strain NCPPB 382), this protein is Xylose isomerase.